The chain runs to 299 residues: uncharacterized protein (299 aa).

Residues 1–38 are disordered; it reads MSLDSNSDTEFELVPKFQTQPTRGDAPKSPELEEVSTV.

This sequence belongs to the calycin superfamily. Fatty-acid binding protein (FABP) family.

This is an uncharacterized protein from Caenorhabditis elegans.